Reading from the N-terminus, the 271-residue chain is Diaminopimelate epimerase (271 aa).

Substrate contacts are provided by asparagine 13, glutamine 46, and asparagine 66. The active-site Proton donor is cysteine 75. Substrate is bound by residues 76–77 (GN), asparagine 155, asparagine 188, and 206–207 (ER). Residue cysteine 215 is the Proton acceptor of the active site. A substrate-binding site is contributed by 216 to 217 (GS).

This sequence belongs to the diaminopimelate epimerase family. Homodimer.

It localises to the cytoplasm. It catalyses the reaction (2S,6S)-2,6-diaminopimelate = meso-2,6-diaminopimelate. It participates in amino-acid biosynthesis; L-lysine biosynthesis via DAP pathway; DL-2,6-diaminopimelate from LL-2,6-diaminopimelate: step 1/1. In terms of biological role, catalyzes the stereoinversion of LL-2,6-diaminopimelate (L,L-DAP) to meso-diaminopimelate (meso-DAP), a precursor of L-lysine and an essential component of the bacterial peptidoglycan. This is Diaminopimelate epimerase from Vesicomyosocius okutanii subsp. Calyptogena okutanii (strain HA).